We begin with the raw amino-acid sequence, 82 residues long: Small ribosomal subunit protein bS16 (82 aa).

This sequence belongs to the bacterial ribosomal protein bS16 family.

In Psychromonas ingrahamii (strain DSM 17664 / CCUG 51855 / 37), this protein is Small ribosomal subunit protein bS16.